The chain runs to 903 residues: Calcium-activated chloride channel regulator 1 (903 aa).

The first 21 residues, 1-21 (MVPRLTVILFLTLHLLPGMKS), serve as a signal peptide directing secretion. The segment at 45–199 (DEKLIQNIKE…HITGTNVIVK (155 aa)) is metalloprotease domain. A Zn(2+)-binding site is contributed by His155. The active site involves Glu156. Zn(2+)-binding residues include His159 and Asp166. One can recognise a VWFA domain in the interval 308 to 476 (VVCLVLDKSG…NGLTNAFSRI (169 aa)). N-linked (GlcNAc...) asparagine glycans are attached at residues Asn360, Asn372, Asn504, and Asn842. The chain crosses the membrane as a helical span at residues 883–903 (GTKISAINLAIFALAMILSIV).

It belongs to the CLCR family. Glycosylated. In terms of processing, the 125-kDa product is autoproteolytically processed by the metalloprotease domain and yields to two cell-surface-associated subunits, a 90-kDa protein and a group of 37- to 41-kDa proteins. The cleavage is necessary for calcium-activated chloride channel (CaCC) activation activity. Trachea.

It localises to the apical cell membrane. Functionally, may be involved in mediating calcium-activated chloride conductance. May play critical roles in goblet cell metaplasia, mucus hypersecretion, cystic fibrosis and AHR. May be involved in the regulation of mucus production and/or secretion by goblet cells. Involved in the regulation of tissue inflammation in the innate immune response. May play a role as a tumor suppressor. Induces MUC5AC. The chain is Calcium-activated chloride channel regulator 1 from Bos taurus (Bovine).